Consider the following 67-residue polypeptide: Large ribosomal subunit protein uL29c (67 aa).

Belongs to the universal ribosomal protein uL29 family.

Its subcellular location is the plastid. It is found in the chloroplast. The polypeptide is Large ribosomal subunit protein uL29c (rpl29) (Porphyra purpurea (Red seaweed)).